The sequence spans 832 residues: Mechanosensitive cation channel TMEM63B (832 aa).

Topologically, residues 1–40 are extracellular; sequence MLPFLLATLGTTALNNSNPKDYCYSARIRSTVLQGLPFGG. The chain crosses the membrane as a helical span at residues 41–65; the sequence is VPTVLALDFMCFLALLFLFSILRKV. Cysteine 51 is lipidated: S-palmitoyl cysteine. Topologically, residues 66–145 are cytoplasmic; sequence AWDYGRLALV…KDDEIRDKCG (80 aa). A Mediates endoplasmic reticulum retention motif is present at residues 86–88; sequence RDR. Residues serine 111, serine 113, serine 114, and serine 115 each carry the phosphoserine modification. Residue cysteine 126 is the site of S-palmitoyl cysteine attachment. A helical membrane pass occupies residues 146-178; it reads GDAVHYLSFQRHIIGLLVVVGVLSVGIVLPVNF. Residues 179 to 202 lie on the Extracellular side of the membrane; the sequence is SGDLLENNAYSFGRTTIANLKSGN. A helical membrane pass occupies residues 203 to 227; the sequence is NLLWLHTSFAFLYLLLTVYSMRRHT. Residues 228–427 are Cytoplasmic-facing; that stretch reads SKMRYKEDDL…IYWEHLSIRG (200 aa). Residues 231 to 426 are intracellular linker IL2; confers mechanosensitivity; it reads RYKEDDLVKR…NIYWEHLSIR (196 aa). Residues cysteine 382 and cysteine 398 are each lipidated (S-palmitoyl cysteine). The chain crosses the membrane as a helical span at residues 428–457; the sequence is FIWWLRCLVINVVLFILLFFLTTPAIIITT. At 458 to 472 the chain is on the extracellular side; that stretch reads MDKFNVTKPVEYLNN. The N-linked (GlcNAc...) asparagine glycan is linked to asparagine 462. A helical membrane pass occupies residues 473 to 502; sequence PIITQFFPTLLLWCFSALLPTIVYYSAFFE. The Cytoplasmic portion of the chain corresponds to 503–506; sequence AHWT. Residues 507 to 543 form a helical membrane-spanning segment; it reads RSGENRTTMHKCYTFLIFMVLLLPSLGLSSLDLFFRW. The Extracellular segment spans residues 544-566; the sequence is LFDKKFLAEAAIRFECVFLPDNG. A helical membrane pass occupies residues 567–599; that stretch reads AFFVNYVIASAFIGNAMDLLRIPGLLMYMIRLC. The segment at 567–599 is gating helix; it reads AFFVNYVIASAFIGNAMDLLRIPGLLMYMIRLC. Topologically, residues 600-619 are cytoplasmic; that stretch reads LARSAAERRNVKRHQAYEFQ. A helical membrane pass occupies residues 620–638; sequence FGAAYAWMMCVFTVVMTYS. Topologically, residues 639 to 641 are extracellular; it reads ITC. A helical membrane pass occupies residues 642-666; that stretch reads PIIVPFGLMYMLLKHLVDRYNLYYA. Topologically, residues 667-673 are cytoplasmic; sequence YLPAKLD. A helical transmembrane segment spans residues 674-702; the sequence is KKIHSGAVNQVVAAPILCLFWLLFFSTMR. Over 703–707 the chain is Extracellular; the sequence is TGFLA. A helical membrane pass occupies residues 708 to 728; sequence PTSMFTFVVLVITIVICLCHV. 2 S-palmitoyl cysteine lipidation sites follow: cysteine 726 and cysteine 729. Residues 729 to 832 lie on the Cytoplasmic side of the membrane; that stretch reads CFGHFKYLSA…DSLIENEIHQ (104 aa). The interval 780–814 is disordered; it reads EVDGDGDGAPGSSGDEPPSSSSQDEELLMPPDALT. The span at 789-801 shows a compositional bias: low complexity; that stretch reads PGSSGDEPPSSSS.

This sequence belongs to the CSC1 (TC 1.A.17) family. Monomer. Interacts with SLC19A2; interaction is required for the phospholipid scramblase activity. Post-translationally, palmitoylation is required for localization to the plasma membrane and stability. In terms of processing, N-Glycosylated.

It localises to the cell membrane. The protein resides in the endoplasmic reticulum membrane. It is found in the lysosome membrane. The protein localises to the early endosome membrane. It catalyses the reaction Ca(2+)(in) = Ca(2+)(out). The catalysed reaction is Mg(2+)(in) = Mg(2+)(out). It carries out the reaction K(+)(in) = K(+)(out). The enzyme catalyses Na(+)(in) = Na(+)(out). It catalyses the reaction Cs(+)(in) = Cs(+)(out). The catalysed reaction is a 1,2-diacyl-sn-glycero-3-phosphocholine(in) = a 1,2-diacyl-sn-glycero-3-phosphocholine(out). It carries out the reaction a sphingomyelin(in) = a sphingomyelin(out). Its function is as follows. Mechanosensitive cation channel with low conductance and high activation threshold. Osmosensitive cation channel preferentially activated by hypotonic stress. Also acts as a phospholipid scramblase in response to changes in membrane structure: upon changes in membrane curvature and thickness, alters its conformation and translocates phospholipids, such as phosphatidylcholine and sphingomyelin, thereby controlling plasma membrane lipid distribution. Forms a heterodimer with SLC19A2, which mediates phospholipid scramblase activity following Ca(2+) stimulation. Expressed in excitatory neurons of the subfornical organ and functions as a thirst receptor that mediates neuronal response to hyperosmolality to drive thirst and drinking behavior. Facilitates intestinal motility by promoting proliferation of intestinal stem cells. Essential for the baby's first breath and respiration throughout life. Upon lung inflation conducts cation currents in alveolar type 1 and 2 cells triggering lamellar body exocytosis and surfactant secretion into airspace. Acts as an osmosensor in cochlear outer hair cells (OHCs) where it mediates calcium influx and regulatory volume decrease response. Required for the maintenance of OHC morphology, OHC survival and normal hearing. The chain is Mechanosensitive cation channel TMEM63B from Homo sapiens (Human).